Reading from the N-terminus, the 1070-residue chain is DNA-directed RNA polymerase subunit beta (1070 aa).

Belongs to the RNA polymerase beta chain family. In terms of assembly, in plastids the minimal PEP RNA polymerase catalytic core is composed of four subunits: alpha, beta, beta', and beta''. When a (nuclear-encoded) sigma factor is associated with the core the holoenzyme is formed, which can initiate transcription.

It localises to the plastid. It is found in the chloroplast. It catalyses the reaction RNA(n) + a ribonucleoside 5'-triphosphate = RNA(n+1) + diphosphate. DNA-dependent RNA polymerase catalyzes the transcription of DNA into RNA using the four ribonucleoside triphosphates as substrates. This Nandina domestica (Heavenly bamboo) protein is DNA-directed RNA polymerase subunit beta.